We begin with the raw amino-acid sequence, 481 residues long: ATP synthase subunit beta (481 aa).

167 to 174 (GGAGVGKT) contributes to the ATP binding site.

The protein belongs to the ATPase alpha/beta chains family. In terms of assembly, F-type ATPases have 2 components, CF(1) - the catalytic core - and CF(0) - the membrane proton channel. CF(1) has five subunits: alpha(3), beta(3), gamma(1), delta(1), epsilon(1). CF(0) has three main subunits: a(1), b(2) and c(9-12). The alpha and beta chains form an alternating ring which encloses part of the gamma chain. CF(1) is attached to CF(0) by a central stalk formed by the gamma and epsilon chains, while a peripheral stalk is formed by the delta and b chains.

Its subcellular location is the cell membrane. The catalysed reaction is ATP + H2O + 4 H(+)(in) = ADP + phosphate + 5 H(+)(out). In terms of biological role, produces ATP from ADP in the presence of a proton gradient across the membrane. The catalytic sites are hosted primarily by the beta subunits. The chain is ATP synthase subunit beta from Corynebacterium efficiens (strain DSM 44549 / YS-314 / AJ 12310 / JCM 11189 / NBRC 100395).